Reading from the N-terminus, the 105-residue chain is Large ribosomal subunit protein bL21 (105 aa).

Belongs to the bacterial ribosomal protein bL21 family. As to quaternary structure, part of the 50S ribosomal subunit. Contacts protein L20.

Its function is as follows. This protein binds to 23S rRNA in the presence of protein L20. This chain is Large ribosomal subunit protein bL21, found in Methylobacterium nodulans (strain LMG 21967 / CNCM I-2342 / ORS 2060).